The chain runs to 56 residues: Metallothionein (56 aa).

Zn(2+) is bound by residues C9, C11, C14, C16, C32, C36, H40, C47, H49, C52, and C54.

Belongs to the metallothionein superfamily. Type 14 family.

Functionally, may play a role in essential metal ion homeostasis (especially zinc homeostasis) and resistance to certain non-essential metal ions. Binds four zinc ions. The sequence is that of Metallothionein (smtA) from Synechococcus elongatus (strain ATCC 33912 / PCC 7942 / FACHB-805) (Anacystis nidulans R2).